Reading from the N-terminus, the 196-residue chain is MVAEVQKQAPPFKKTAVVDGIFEEISLEKYKGKYVVLAFVPLAFSFVCPTEIVAFSDAAKKFEDQGAQVLFASTDSEYSLLAWTNLPRKDGGLGPVKVPLLADKNHSLSRDYGVLIEKEGIALRGLFIIDPKGIIRHITINDLSVGRNVNEALRLVEGFQWTDKNGTVLPCNWTPGAATIKPDVKDSKEYFKNANN.

Residues alanine 3–tryptophan 161 form the Thioredoxin domain. Lysine 14 is covalently cross-linked (Glycyl lysine isopeptide (Lys-Gly) (interchain with G-Cter in ubiquitin)). Cysteine 48 acts as the Cysteine sulfenic acid (-SOH) intermediate in catalysis. Residues lysine 89 and lysine 132 each participate in a glycyl lysine isopeptide (Lys-Gly) (interchain with G-Cter in ubiquitin) cross-link. Threonine 174 bears the Phosphothreonine mark.

This sequence belongs to the peroxiredoxin family. AhpC/Prx1 subfamily. In terms of assembly, homodimer; disulfide-linked, upon oxidation.

Its subcellular location is the cytoplasm. It catalyses the reaction a hydroperoxide + [thioredoxin]-dithiol = an alcohol + [thioredoxin]-disulfide + H2O. Thiol-specific peroxidase that catalyzes the reduction of hydrogen peroxide and organic hydroperoxides to water and alcohols, respectively. Plays a role in cell protection against oxidative stress by detoxifying peroxides and as sensor of hydrogen peroxide-mediated signaling events. Can act alternatively as peroxidase and molecular chaperone. Oxidative stress and heat shock exposure cause a reversible shift of the protein structure from low MW species to high MW complexes, triggering a peroxidase-to-chaperone functional switch. The chaperone function of the protein enhances resistance to heat shock. The sequence is that of Peroxiredoxin TSA2 from Saccharomyces cerevisiae (strain ATCC 204508 / S288c) (Baker's yeast).